A 688-amino-acid polypeptide reads, in one-letter code: Glycine--tRNA ligase beta subunit (688 aa).

Belongs to the class-II aminoacyl-tRNA synthetase family. In terms of assembly, tetramer of two alpha and two beta subunits.

It is found in the cytoplasm. It catalyses the reaction tRNA(Gly) + glycine + ATP = glycyl-tRNA(Gly) + AMP + diphosphate. The protein is Glycine--tRNA ligase beta subunit of Lactobacillus delbrueckii subsp. bulgaricus (strain ATCC BAA-365 / Lb-18).